A 348-amino-acid chain; its full sequence is Succinoglycan biosynthesis protein ExoO (348 aa).

Positions 322–348 (HSAPRAAPVTAAAERSPLGNDPRISKG) are disordered. Over residues 324-334 (APRAAPVTAAA) the composition is skewed to low complexity.

This sequence belongs to the glycosyltransferase 2 family.

It localises to the cytoplasm. Its pathway is glycan metabolism; exopolysaccharide biosynthesis. Glycosyltransferase required for the synthesis of succinoglycan (EPS I). Needed for the addition of the fifth sugar (glucose), catalyzes the formation of a beta-1,6 linkage between the fourth and fifth sugar. This Rhizobium meliloti (strain 1021) (Ensifer meliloti) protein is Succinoglycan biosynthesis protein ExoO (exoO).